A 174-amino-acid polypeptide reads, in one-letter code: Small ribosomal subunit protein uS5 (174 aa).

Residues 20 to 83 (IEDQLVAINR…EAGKKRMIKV (64 aa)) enclose the S5 DRBM domain.

This sequence belongs to the universal ribosomal protein uS5 family. In terms of assembly, part of the 30S ribosomal subunit. Contacts proteins S4 and S8.

In terms of biological role, with S4 and S12 plays an important role in translational accuracy. Located at the back of the 30S subunit body where it stabilizes the conformation of the head with respect to the body. This chain is Small ribosomal subunit protein uS5, found in Lactobacillus gasseri (strain ATCC 33323 / DSM 20243 / BCRC 14619 / CIP 102991 / JCM 1131 / KCTC 3163 / NCIMB 11718 / NCTC 13722 / AM63).